A 133-amino-acid polypeptide reads, in one-letter code: Small ribosomal subunit protein uS11 (133 aa).

Residues 1–23 form a disordered region; the sequence is MPPKTRGAVRKPRKKDKKNIALG. Over residues 7-17 the composition is skewed to basic residues; sequence GAVRKPRKKDK.

The protein belongs to the universal ribosomal protein uS11 family. Part of the 30S ribosomal subunit. Interacts with proteins S7 and S18. Binds to IF-3.

Its function is as follows. Located on the platform of the 30S subunit, it bridges several disparate RNA helices of the 16S rRNA. Forms part of the Shine-Dalgarno cleft in the 70S ribosome. This is Small ribosomal subunit protein uS11 from Pseudarthrobacter chlorophenolicus (strain ATCC 700700 / DSM 12829 / CIP 107037 / JCM 12360 / KCTC 9906 / NCIMB 13794 / A6) (Arthrobacter chlorophenolicus).